A 399-amino-acid chain; its full sequence is MISSQEAFEEIKRGAVEIIHEDELLSRLAEEKPLRIKLGFDPTAPDIHLGHTVVLNKLRQFQTLGHEVIFLIGDFTAMIGDPTGKNITRQPLTREIVMENTKTYETQAFRILDPDKTQVTSNSTWINKLKADDLVRLAATYTVARMLERDDFNKRYLSQQPIAIHEFLYPLLQGYDSVALKADVELGGTDQKFNLLVGRELQKHFGQRPQCVLTVPLLEGLDGIQKMSKSLNNYIGITEPPEEMFGKVMSISDELMWRYYELLSFRPMREINRWREEVSEGRNPRDIKILLAEELVTRFHSKEAATKAHQHFIDRFKRHELPTDLDEIELTAENTHLTIGYILQRAGLVNTTSEGLRMIAQGAVRIDGERVEDIKLAIPRGESHLFQVGKRRFAKVKVI.

A 'HIGH' region motif is present at residues P42–H51. The short motif at K226 to S230 is the 'KMSKS' region element. Position 229 (K229) interacts with ATP. The S4 RNA-binding domain occupies L337 to V398.

It belongs to the class-I aminoacyl-tRNA synthetase family. TyrS type 2 subfamily. In terms of assembly, homodimer.

Its subcellular location is the cytoplasm. It carries out the reaction tRNA(Tyr) + L-tyrosine + ATP = L-tyrosyl-tRNA(Tyr) + AMP + diphosphate + H(+). Catalyzes the attachment of tyrosine to tRNA(Tyr) in a two-step reaction: tyrosine is first activated by ATP to form Tyr-AMP and then transferred to the acceptor end of tRNA(Tyr). This is Tyrosine--tRNA ligase from Coxiella burnetii (strain RSA 493 / Nine Mile phase I).